The following is a 568-amino-acid chain: Lipoprotein LpqB (568 aa).

A signal peptide spans 1 to 23 (MSKISTKLKALSAVLSVTTLVAG). Cys-24 carries N-palmitoyl cysteine lipidation. Cys-24 carries S-diacylglycerol cysteine lipidation.

This sequence belongs to the LpqB lipoprotein family.

It localises to the cell membrane. This Corynebacterium glutamicum (strain R) protein is Lipoprotein LpqB.